A 436-amino-acid chain; its full sequence is MGFQNEASSSSYTLKIPPPAREDSPLLGKGPPLSSQFKTFANVFIAVVGAGVLGLPYAFKRTGWLMGVLLLVSVSVLTHHCMMLLVYTRRKLDSFNAGISKIGSFGDLGFAVCGSLGRIVVDLFIILSQAGFCVGYLIFIGTTLANLSDPESPTSLRHQFTRLGSEFLGVSSKSLYIWGCFPFQLGLNSIKTLTHLAPLSIFADIVDLGAMAVVIVEDSMIILKQRPDVVAFGGMSLFLYGMGVAVYSFEGVGMVLPLESEMKDKDKFGKVLALGMGFISLIYIAFGILGYLAFGEDTMDIITANLGAGLVSTVVQLGLCINLFFTFPLMMNPVFEIVERRFSRGMYSAWLRWVLVLAVTLVALFVPNFADFLSLVGSSTCCVLGFVLPALFHLLVFKEEMGWLQWSSDTAIVVLGVVLAVSGTWSSLSEIFSVKV.

Residues 1-13 (MGFQNEASSSSYT) are compositionally biased toward polar residues. The tract at residues 1 to 21 (MGFQNEASSSSYTLKIPPPAR) is disordered. Over 1–38 (MGFQNEASSSSYTLKIPPPAREDSPLLGKGPPLSSQFK) the chain is Cytoplasmic. A helical membrane pass occupies residues 39–59 (TFANVFIAVVGAGVLGLPYAF). Residues 60–65 (KRTGWL) lie on the Vacuolar side of the membrane. A helical transmembrane segment spans residues 66 to 86 (MGVLLLVSVSVLTHHCMMLLV). Residues 87–118 (YTRRKLDSFNAGISKIGSFGDLGFAVCGSLGR) are Cytoplasmic-facing. Residues 119 to 139 (IVVDLFIILSQAGFCVGYLIF) traverse the membrane as a helical segment. Residues 140-166 (IGTTLANLSDPESPTSLRHQFTRLGSE) are Vacuolar-facing. Residues 167–187 (FLGVSSKSLYIWGCFPFQLGL) traverse the membrane as a helical segment. The Cytoplasmic portion of the chain corresponds to 188-195 (NSIKTLTH). The helical transmembrane segment at 196-216 (LAPLSIFADIVDLGAMAVVIV) threads the bilayer. Residues 217 to 228 (EDSMIILKQRPD) are Vacuolar-facing. The chain crosses the membrane as a helical span at residues 229–249 (VVAFGGMSLFLYGMGVAVYSF). Over 250–273 (EGVGMVLPLESEMKDKDKFGKVLA) the chain is Cytoplasmic. The chain crosses the membrane as a helical span at residues 274–294 (LGMGFISLIYIAFGILGYLAF). Residues 295-309 (GEDTMDIITANLGAG) lie on the Vacuolar side of the membrane. Residues 310 to 330 (LVSTVVQLGLCINLFFTFPLM) traverse the membrane as a helical segment. The Cytoplasmic segment spans residues 331–352 (MNPVFEIVERRFSRGMYSAWLR). A helical membrane pass occupies residues 353 to 373 (WVLVLAVTLVALFVPNFADFL). Residues 374–376 (SLV) are Vacuolar-facing. A helical transmembrane segment spans residues 377–397 (GSSTCCVLGFVLPALFHLLVF). At 398 to 411 (KEEMGWLQWSSDTA) the chain is on the cytoplasmic side. The helical transmembrane segment at 412–432 (IVVLGVVLAVSGTWSSLSEIF) threads the bilayer. Over 433–436 (SVKV) the chain is Vacuolar.

The protein belongs to the amino acid/polyamine transporter 2 family. Amino acid/auxin permease (AAAP) (TC 2.A.18.8) subfamily. As to expression, ubiquitous.

It localises to the vacuole membrane. Its function is as follows. Translocates preferentially neutral amino acids from the vacuole to the cytoplasm. The chain is Amino acid transporter AVT3C from Arabidopsis thaliana (Mouse-ear cress).